We begin with the raw amino-acid sequence, 470 residues long: MKSILDGLADTTFRTITTDLLYLGPNEVQYDDSKGDISSKLVYFPQKLPLSSLRGDPLHEKMTIIDDPLLSIPLDQINATDFYNKSIIFKDTDDNVQCGKNFMDMECFMILTPSQQLVIAALSIILGTFTVLENMLVLVVIVQSRSLRCRPSYHFIGSLAVADLLGSVIFVYSFVDFHVFHRKDSPNVFLFKLGGVTASFTASVGSLFLTAIDRYISIHRPMSYKRIVTRTKAVIAFCMMWTIAIVIAVLPLFGWNCIKLRSVCSDIFPLIDETYLMFWIGVTSVLLLFIVYAYMYILWKAHNHAVRMLQRGTQKSIIVHTSEDGKVHITRPDQTRMDIRLAKTLVLILVVLIICWGPLMAIMVYDVFGKINKTIKTVFAFCSVLCLLNSTVNPIIYALRSKDLRNAFCSMFPSCQGTAQPLDNSMESDCQNRHVNNSNAHRAAESCIKSTVKIAKVTMSVSTDTSAEAV.

The Extracellular portion of the chain corresponds to 1 to 121; sequence MKSILDGLAD…TPSQQLVIAA (121 aa). Positions 2-23 are required for mitochondrial localization; the sequence is KSILDGLADTTFRTITTDLLYL. 2 N-linked (GlcNAc...) asparagine glycosylation sites follow: N78 and N84. A helical transmembrane segment spans residues 122-142; sequence LSIILGTFTVLENMLVLVVIV. Over 143–154 the chain is Cytoplasmic; it reads QSRSLRCRPSYH. The helical transmembrane segment at 155-175 threads the bilayer; the sequence is FIGSLAVADLLGSVIFVYSFV. At 176–187 the chain is on the extracellular side; it reads DFHVFHRKDSPN. Residues 188–208 traverse the membrane as a helical segment; that stretch reads VFLFKLGGVTASFTASVGSLF. Over 209–232 the chain is Cytoplasmic; the sequence is LTAIDRYISIHRPMSYKRIVTRTK. A helical membrane pass occupies residues 233–253; sequence AVIAFCMMWTIAIVIAVLPLF. Residues 254-277 lie on the Extracellular side of the membrane; that stretch reads GWNCIKLRSVCSDIFPLIDETYLM. A helical transmembrane segment spans residues 278–298; that stretch reads FWIGVTSVLLLFIVYAYMYIL. Residues 299-344 are Cytoplasmic-facing; that stretch reads WKAHNHAVRMLQRGTQKSIIVHTSEDGKVHITRPDQTRMDIRLAKT. A helical membrane pass occupies residues 345–365; the sequence is LVLILVVLIICWGPLMAIMVY. Over 366-377 the chain is Extracellular; sequence DVFGKINKTIKT. A glycan (N-linked (GlcNAc...) asparagine) is linked at N372. Residues 378 to 398 traverse the membrane as a helical segment; it reads VFAFCSVLCLLNSTVNPIIYA. At 399-470 the chain is on the cytoplasmic side; the sequence is LRSKDLRNAF…VSTDTSAEAV (72 aa). C415 carries the S-palmitoyl cysteine lipid modification.

Belongs to the G-protein coupled receptor 1 family. In terms of processing, palmitoylation at Cys-415 is important for recruitment at both plasma membrane and lipid rafts and association with G protein alpha subunits. As to expression, expressed in neurons, especially in the olfactory bulbs, telencephalic pallium, and hypothalamus and also in the midbrain and hindbrain (in the mesencephalic tegmentum and dorsolateral rhombencephalon). Expressed also in the spinal cord.

The protein resides in the cell membrane. It localises to the mitochondrion outer membrane. It is found in the cell projection. The protein localises to the axon. Its subcellular location is the presynapse. G-protein coupled receptor for cannabinoids. Mediates many cannabinoid-induced effects in the central nervous system (CNS), as well as in peripheral tissues. Regulates cellular respiration and energy production in response to cannabinoids. Signaling typically involves reduction in cyclic AMP. The sequence is that of Cannabinoid receptor 1 (cnr1) from Xenopus laevis (African clawed frog).